We begin with the raw amino-acid sequence, 695 residues long: DNA ligase (695 aa).

NAD(+) contacts are provided by residues 44–48 (DAEYD), 93–94 (SL), and E123. Catalysis depends on K125, which acts as the N6-AMP-lysine intermediate. R146, E184, K300, and K324 together coordinate NAD(+). Zn(2+)-binding residues include C418, C421, C436, and C442. Residues 605–694 (SAAKPLAGIT…PDAARSMAQR (90 aa)) form the BRCT domain.

The protein belongs to the NAD-dependent DNA ligase family. LigA subfamily. Mg(2+) is required as a cofactor. The cofactor is Mn(2+).

The enzyme catalyses NAD(+) + (deoxyribonucleotide)n-3'-hydroxyl + 5'-phospho-(deoxyribonucleotide)m = (deoxyribonucleotide)n+m + AMP + beta-nicotinamide D-nucleotide.. In terms of biological role, DNA ligase that catalyzes the formation of phosphodiester linkages between 5'-phosphoryl and 3'-hydroxyl groups in double-stranded DNA using NAD as a coenzyme and as the energy source for the reaction. It is essential for DNA replication and repair of damaged DNA. The chain is DNA ligase from Acidothermus cellulolyticus (strain ATCC 43068 / DSM 8971 / 11B).